The following is a 137-amino-acid chain: Ciliary microtubule inner protein 1 (137 aa).

In terms of tissue distribution, expressed in airway epithelial cells, renal tubular cells, pancreatic acinar cells and epithelial cells of the stomach, duodenum, and gallbladder (at protein level).

It localises to the cell projection. The protein resides in the cilium. The sequence is that of Ciliary microtubule inner protein 1 from Homo sapiens (Human).